We begin with the raw amino-acid sequence, 219 residues long: Transmembrane protein 179B (219 aa).

4 helical membrane passes run 9–29 (VELA…AAMT), 65–85 (FVAG…LFWI), 96–116 (GAIG…LVLV), and 167–187 (TSSW…VVQW). Positions 198 to 219 (ERGDPEWSSETDALVGSRLSHS) are disordered. A phosphoserine mark is found at Ser-206 and Ser-214.

This sequence belongs to the TMEM179 family.

The protein resides in the membrane. The polypeptide is Transmembrane protein 179B (TMEM179B) (Homo sapiens (Human)).